The primary structure comprises 227 residues: N-acetyltransferase 8B (227 aa).

Residues methionine 1–threonine 42 are Cytoplasmic-facing. Residues leucine 43–alanine 63 traverse the membrane as a helical; Signal-anchor for type II membrane protein segment. The region spanning isoleucine 61 to histidine 214 is the N-acetyltransferase domain. The Lumenal portion of the chain corresponds to leucine 64–leucine 227. N6-acetyllysine is present on lysine 99.

The protein belongs to the NAT8 family. Post-translationally, acetylation on Lys-99 modulates enzymatic activity.

It is found in the endoplasmic reticulum-Golgi intermediate compartment membrane. The protein localises to the endoplasmic reticulum membrane. It catalyses the reaction L-lysyl-[protein] + acetyl-CoA = N(6)-acetyl-L-lysyl-[protein] + CoA + H(+). Allosterically regulated by acetylation at residue Lys-99. Functionally, endoplasmic reticulum (ER)-membrane-bound lysine N-acetyltransferase catalyzing the N6-acetylation of lysine residues in the lumen of the ER in various proteins, including PROM1 and BACE1, using acetyl-CoA as acetyl donor. Thereby, may regulate apoptosis through the acetylation and the regulation of the expression of PROM1. Acetylates and stabilizes BACE1 immature protein, leading to increased steady-state levels in neurons. By acting on BACE1 expression, may regulate amyloid beta-peptide formation. N(6)-lysine acetylation in ER maintains protein homeostasis and regulates reticulophagy. This chain is N-acetyltransferase 8B, found in Homo sapiens (Human).